The primary structure comprises 226 residues: MTKTIKTVSFAAAAILVVIICTFLIIRQTHENVLSKETVVKKVEASYEGKVTKATQSKDKKTYDITLENPKGTYFVKADAISADILSMNRVKAVNPSAMTEKEAEHLALERVPGTVKKQTRQSQVATYTIQKEDGKTYEVKVDMQAKTVLSADQISSKDQQKTPITKKEAKTIAERKTGGTADDADLEESEGTLIFEVDVDLPDNKEATVKINAYTGKVANIVYED.

The helical transmembrane segment at 5–25 (IKTVSFAAAAILVVIICTFLI) threads the bilayer.

The protein resides in the cell membrane. This is an uncharacterized protein from Bacillus subtilis (strain 168).